A 491-amino-acid chain; its full sequence is Dipeptide and tripeptide permease B (491 aa).

The Cytoplasmic segment spans residues 1–26 (MNNTAPGLLHQPKPFFMIFFVELWER). The chain crosses the membrane as a helical span at residues 27–47 (FGYYGVQGILAVFFVKQLGFS). Topologically, residues 48–51 (QEQA) are periplasmic. The chain crosses the membrane as a helical span at residues 52-72 (FITFGAFAALVYGLISIGGYV). The Cytoplasmic portion of the chain corresponds to 73–81 (GDHLLGTKR). Residues 82–102 (TMVLGAIVLALGYFMTGMSLL) form a helical membrane-spanning segment. Over 103–105 (KPE) the chain is Periplasmic. The helical transmembrane segment at 106 to 126 (MIFIALGTIAVGNGLFKANPA) threads the bilayer. The Cytoplasmic portion of the chain corresponds to 127–145 (SLLSKCYPPKDPRLDGAFT). The helical transmembrane segment at 146-166 (LFYMSINIGSLLSLSLAPIIA) threads the bilayer. Topologically, residues 167–171 (ERFGY) are periplasmic. Residues 172–192 (AVTYNLCGLGLIIALLVYFAC) form a helical membrane-spanning segment. Topologically, residues 193-210 (RGMVRSIGSAPDHQPLNY) are cytoplasmic. The chain crosses the membrane as a helical span at residues 211 to 231 (GKLLLVLAGAVVMIFLCAWLM). A topological domain (periplasmic) is located at residue His-232. The chain crosses the membrane as a helical span at residues 233–253 (NVGVANIVLIAVSAVVLYFFF). At 254–266 (REAFKQDKTGRNR) the chain is on the cytoplasmic side. A helical membrane pass occupies residues 267–287 (MFVAFILMIEAVLFYILYAQM). The Periplasmic portion of the chain corresponds to 288–312 (PTSLNFFAINNVRHELLGFAINPVS). The chain crosses the membrane as a helical span at residues 313–335 (FQALNPFWVVVASPILASIYTRL). Residues 336-349 (GSRGRDMTMPTKFT) are Cytoplasmic-facing. The chain crosses the membrane as a helical span at residues 350 to 370 (LGMLLCSLGFLTAAAAGMWFA). Topologically, residues 371-378 (DAQGLTSP) are periplasmic. A helical transmembrane segment spans residues 379–399 (WFVVLVYLFQSLGELMISALG). The Cytoplasmic portion of the chain corresponds to 400-423 (LAMVAALVPQYLMGFILGMWFLTQ). A helical transmembrane segment spans residues 424 to 444 (AAAFLLGGYVATFTAVPAGIH). Over 445–454 (DPLQTLPIYT) the chain is Periplasmic. A helical membrane pass occupies residues 455–475 (GVFGKIGIATLIVTLVMAAMV). Residues 476–491 (PWLNRMMNTPADGQKA) lie on the Cytoplasmic side of the membrane.

It belongs to the major facilitator superfamily. Proton-dependent oligopeptide transporter (POT/PTR) (TC 2.A.17) family. DtpB subfamily.

The protein resides in the cell inner membrane. Proton-dependent permease that transports di- and tripeptides. The protein is Dipeptide and tripeptide permease B of Edwardsiella piscicida.